The chain runs to 167 residues: Translation initiation factor IF-3 (167 aa).

The protein belongs to the IF-3 family. As to quaternary structure, monomer.

Its subcellular location is the cytoplasm. Functionally, IF-3 binds to the 30S ribosomal subunit and shifts the equilibrium between 70S ribosomes and their 50S and 30S subunits in favor of the free subunits, thus enhancing the availability of 30S subunits on which protein synthesis initiation begins. This chain is Translation initiation factor IF-3, found in Shouchella clausii (strain KSM-K16) (Alkalihalobacillus clausii).